Consider the following 692-residue polypeptide: Follicle-stimulating hormone receptor (692 aa).

The N-terminal stretch at 1 to 17 is a signal peptide; the sequence is MALLLVSLLAFLGTGSG. Disulfide bonds link Cys18-Cys25 and Cys23-Cys32. The LRRNT domain maps to 18–46; the sequence is CHHWLCHCSNRVFLCQDSKVTEIPTDLPR. Topologically, residues 18–365 are extracellular; sequence CHHWLCHCSN…EDIMGYNILR (348 aa). LRR repeat units lie at residues 49-72, 73-97, 98-118, 119-143, 144-169, 170-192, 193-216, 217-240, and 241-259; these read IELRFVLTKLRVIPKGSFAGFGDL, EKIEISQNDVLEVIEADVFSNLPKL, HEIRIEKANNLLYINPEAFQN, LPSLRYLLISNTGIKHLPAVHKIQS, LQKVLLDIQDNINIHIVARNSFMGLS, FESVILWLSKNGIEEIHNCAFNG, TQLDELNLSDNNNLEELPNDVFQG, ASGPVILDISRTKVHSLPNHGLEN, and LKKLRARSTYRLKKLPNLD. Asn191 and Asn199 each carry an N-linked (GlcNAc...) asparagine glycan. 4 disulfide bridges follow: Cys275-Cys345, Cys276-Cys292, Cys276-Cys355, and Cys292-Cys337. A glycan (N-linked (GlcNAc...) asparagine) is linked at Asn293. The residue at position 334 (Tyr334) is a Sulfotyrosine. The chain crosses the membrane as a helical span at residues 366–386; it reads VLIWFISILAITGNTTVLVVL. Residues 387-397 are Cytoplasmic-facing; that stretch reads TTSQYKLTVPR. The chain crosses the membrane as a helical span at residues 398 to 420; sequence FLMCNLAFADLCIGIYLLLIASV. Over 421-442 the chain is Extracellular; sequence DIHTKSQYHNYAIDWQTGAGCD. An intrachain disulfide couples Cys441 to Cys516. A helical transmembrane segment spans residues 443 to 464; the sequence is AAGFFTVFASELSVYTLTAITL. The Cytoplasmic segment spans residues 465 to 484; it reads ERWHTITHAMQLECKVQLRH. A helical membrane pass occupies residues 485-507; the sequence is AASVMVLGWTFAFAAALFPIFGI. Over 508-527 the chain is Extracellular; it reads SSYMKVSICLPMDIDSPLSQ. The chain crosses the membrane as a helical span at residues 528-549; the sequence is LYVMALLVLNVLAFVVICGCYT. At 550–572 the chain is on the cytoplasmic side; the sequence is HIYLTVRNPTIVSSSSDTKIAKR. The helical transmembrane segment at 573-596 threads the bilayer; sequence MATLIFTDFLCMAPISFFAISASL. At 597–607 the chain is on the extracellular side; sequence KVPLITVSKAK. The helical transmembrane segment at 608–629 threads the bilayer; it reads ILLVLFYPINSCANPFLYAIFT. The Cytoplasmic segment spans residues 630-692; that stretch reads KNFRRDFFIL…LVPLNHSSQN (63 aa).

The protein belongs to the G-protein coupled receptor 1 family. FSH/LSH/TSH subfamily. As to quaternary structure, homotrimer. Functions as a homotrimer binding the FSH hormone heterodimer composed of CGA and FSHB. Interacts with ARRB2. Interacts with APPL2; interaction is independent of follicle stimulating hormone stimulation. N-glycosylated; indirectly required for FSH-binding, possibly via a conformational change that allows high affinity binding of hormone. Post-translationally, sulfated. As to expression, sertoli cells and ovarian granulosa cells.

The protein localises to the cell membrane. Its function is as follows. G protein-coupled receptor for follitropin, the follicle-stimulating hormone. Through cAMP production activates the downstream PI3K-AKT and ERK1/ERK2 signaling pathways. This chain is Follicle-stimulating hormone receptor (Fshr), found in Rattus norvegicus (Rat).